Here is a 485-residue protein sequence, read N- to C-terminus: UBX domain-containing protein 11 (485 aa).

Residues Met-1–Arg-26 are disordered. A coiled-coil region spans residues His-67 to Asp-143. Positions Leu-224–Pro-288 constitute an SEP domain. The 78-residue stretch at Pro-386–Leu-463 folds into the UBX domain. Phosphoserine occurs at positions 479 and 483.

As to quaternary structure, interacts with GNA12, GNA13, RND1, RND2 and RND3. In terms of tissue distribution, strongly expressed in testis. Also expressed in lung, brain and thymus.

It localises to the cytoplasm. The protein resides in the cytoskeleton. May be involved in the reorganization of actin cytoskeleton mediated by RND1, RND2 and RND3. Promotes RHOA activation mediated by GNA12 and GNA13. The sequence is that of UBX domain-containing protein 11 (Ubxn11) from Rattus norvegicus (Rat).